The sequence spans 427 residues: Peptidase B (427 aa).

Positions 195 and 200 each coordinate Mn(2+). The active site involves K207. D218, D277, and E279 together coordinate Mn(2+). Residue R281 is part of the active site.

The protein belongs to the peptidase M17 family. In terms of assembly, homohexamer. The cofactor is Mn(2+).

The protein resides in the cytoplasm. It carries out the reaction Release of an N-terminal amino acid, Xaa, from a peptide or arylamide. Xaa is preferably Glu or Asp but may be other amino acids, including Leu, Met, His, Cys and Gln.. Probably plays an important role in intracellular peptide degradation. The chain is Peptidase B from Salmonella choleraesuis (strain SC-B67).